Here is a 367-residue protein sequence, read N- to C-terminus: DNA replication and repair protein RecF (367 aa).

An ATP-binding site is contributed by 30–37 (GENAQGKT).

The protein belongs to the RecF family.

The protein localises to the cytoplasm. Its function is as follows. The RecF protein is involved in DNA metabolism; it is required for DNA replication and normal SOS inducibility. RecF binds preferentially to single-stranded, linear DNA. It also seems to bind ATP. The protein is DNA replication and repair protein RecF of Chlamydia caviae (strain ATCC VR-813 / DSM 19441 / 03DC25 / GPIC) (Chlamydophila caviae).